A 496-amino-acid polypeptide reads, in one-letter code: Versicolorin B desaturase stcL (496 aa).

Residues 3–23 (FLSLPILTALGAVVYVLFQLV) form a helical membrane-spanning segment. Position 440 (cysteine 440) interacts with heme.

Belongs to the cytochrome P450 family. Heme is required as a cofactor.

Its subcellular location is the membrane. It carries out the reaction versicolorin B + NADPH + O2 + H(+) = versicolorin A + NADP(+) + 2 H2O. It functions in the pathway mycotoxin biosynthesis; sterigmatocystin biosynthesis. Functionally, cytochrome P450 monooxygenase; part of the gene cluster that mediates the biosynthesis of sterigmatocystin (ST), a polyketide-derived furanocoumarin which is part of the most toxic and carcinogenic compounds among the known mycotoxins. The first step in the biosynthesis of sterigmatocystin is the production of hexanoate by the fatty acid synthase (FAS) units stcJ and stcK. The polyketide backbone is assembled by the non-reducing polyketide synthase stcA by condensation of the starter hexanoyl-CoA and 7 malonyl-CoA extender units followed by cyclization and release of norsolorinic acid. Norsolorinic acid is the first stable intermediate in the biosynthesis of sterigmatocystin and is converted into averantin (AVN) by the ketoreductase stcE which reduces the hexanoate ketone to an alcohol. Averantin is then oxidized into 5'-hydroxyaverantin (HAVN) by the cytochrome P450 monooxygenase stcF. 5'-hydroxyaverantin is further converted to 5'-oxyaverantin (OAVN) by the 5'-hydroxyaverantin dehydrogenase stcG. The next step is the conversion of OAVN into averufin (AVF) which is catalyzed by a yet to be identified enzyme. The cytochrome P450 monooxygenase stcB and the flavin-binding monooxygenase stcW are both required for the conversion of averufin to 1-hydroxyversicolorone. The esterase stcI probably catalyzes the formation of versiconal hemiacetal acetate from 1-hydroxyversicolorone. The oxydoreductase stcN then probably catalyzes the biosynthetic step from versiconal to versicolorin B (VERB). The next step is performed by the versicolorin B desaturase stcL to produce versicolorin A (VERA). The ketoreductase stcU and the cytochrome P450 monooxygenase stcS are involved in the conversion of versicolorin A to demethylsterigmatocystin. The Baeyer-Villiger oxidas stcQ and the reductase stcR might be involved in the biosynthetic step from versicolorin A to demethylsterigmatocystin. The final step in the biosynthesis of sterigmatocystin is the methylation of demethylsterigmatocystin catalyzed by the methyltransferase stcP. The sequence is that of Versicolorin B desaturase stcL from Emericella nidulans (strain FGSC A4 / ATCC 38163 / CBS 112.46 / NRRL 194 / M139) (Aspergillus nidulans).